A 228-amino-acid polypeptide reads, in one-letter code: uncharacterized protein (228 aa).

Residues threonine 77–alanine 79, glycine 113, valine 133, and proline 140–leucine 142 contribute to the S-adenosyl-L-methionine site.

It belongs to the class IV-like SAM-binding methyltransferase superfamily. RNA methyltransferase TrmH family.

This is an uncharacterized protein from Escherichia coli (strain K12).